The chain runs to 208 residues: Uracil phosphoribosyltransferase (208 aa).

5-phospho-alpha-D-ribose 1-diphosphate contacts are provided by residues R78, R103, and 130–138; that span reads DPMLATGGS. Residues I193 and 198–200 contribute to the uracil site; that span reads GDA. 5-phospho-alpha-D-ribose 1-diphosphate is bound at residue D199.

This sequence belongs to the UPRTase family. The cofactor is Mg(2+).

It catalyses the reaction UMP + diphosphate = 5-phospho-alpha-D-ribose 1-diphosphate + uracil. It participates in pyrimidine metabolism; UMP biosynthesis via salvage pathway; UMP from uracil: step 1/1. Its activity is regulated as follows. Allosterically activated by GTP. Functionally, catalyzes the conversion of uracil and 5-phospho-alpha-D-ribose 1-diphosphate (PRPP) to UMP and diphosphate. The sequence is that of Uracil phosphoribosyltransferase from Actinobacillus succinogenes (strain ATCC 55618 / DSM 22257 / CCUG 43843 / 130Z).